An 85-amino-acid chain; its full sequence is Putative membrane protein insertion efficiency factor (85 aa).

This sequence belongs to the UPF0161 family.

Its subcellular location is the cell membrane. Functionally, could be involved in insertion of integral membrane proteins into the membrane. The chain is Putative membrane protein insertion efficiency factor from Buchnera aphidicola subsp. Schizaphis graminum (strain Sg).